The primary structure comprises 47 residues: Large ribosomal subunit protein bL34 (47 aa).

The disordered stretch occupies residues methionine 1 to proline 47. Residues isoleucine 10–proline 47 show a composition bias toward basic residues.

The protein belongs to the bacterial ribosomal protein bL34 family.

In Aquifex aeolicus (strain VF5), this protein is Large ribosomal subunit protein bL34 (rpmH).